We begin with the raw amino-acid sequence, 496 residues long: Probable diguanylate cyclase DgcJ (496 aa).

A run of 2 helical transmembrane segments spans residues 11-31 and 305-325; these read FIAA…LVAS and ILYF…TALI. Positions 374–496 constitute a GGDEF domain; the sequence is SSVMFIAIDM…VNKQNKNSRS (123 aa). Residue D382 participates in Mg(2+) binding. Residues N390, H395, and D399 each coordinate substrate. D425 contributes to the Mg(2+) binding site. D425 serves as the catalytic Proton acceptor.

Homodimer. Requires Mg(2+) as cofactor.

The protein localises to the cell inner membrane. It catalyses the reaction 2 GTP = 3',3'-c-di-GMP + 2 diphosphate. It participates in purine metabolism; 3',5'-cyclic di-GMP biosynthesis. Catalyzes the synthesis of cyclic-di-GMP (c-di-GMP) via the condensation of 2 GTP molecules. The polypeptide is Probable diguanylate cyclase DgcJ (Escherichia coli (strain K12)).